Reading from the N-terminus, the 293-residue chain is tRNA pseudouridine synthase B (293 aa).

Asp39 (nucleophile) is an active-site residue.

Belongs to the pseudouridine synthase TruB family. Type 1 subfamily.

It catalyses the reaction uridine(55) in tRNA = pseudouridine(55) in tRNA. Its function is as follows. Responsible for synthesis of pseudouridine from uracil-55 in the psi GC loop of transfer RNAs. The sequence is that of tRNA pseudouridine synthase B from Rickettsia bellii (strain RML369-C).